Here is a 419-residue protein sequence, read N- to C-terminus: UDP-N-acetylglucosamine 1-carboxyvinyltransferase (419 aa).

Residue 22–23 (KN) coordinates phosphoenolpyruvate. Arg91 serves as a coordination point for UDP-N-acetyl-alpha-D-glucosamine. Cys115 acts as the Proton donor in catalysis. Cys115 is modified (2-(S-cysteinyl)pyruvic acid O-phosphothioketal). Residues 120-124 (RPVDL), 160-163 (KVSV), Asp305, and Val327 contribute to the UDP-N-acetyl-alpha-D-glucosamine site.

Belongs to the EPSP synthase family. MurA subfamily.

It localises to the cytoplasm. The enzyme catalyses phosphoenolpyruvate + UDP-N-acetyl-alpha-D-glucosamine = UDP-N-acetyl-3-O-(1-carboxyvinyl)-alpha-D-glucosamine + phosphate. It functions in the pathway cell wall biogenesis; peptidoglycan biosynthesis. Functionally, cell wall formation. Adds enolpyruvyl to UDP-N-acetylglucosamine. This chain is UDP-N-acetylglucosamine 1-carboxyvinyltransferase, found in Shigella dysenteriae serotype 1 (strain Sd197).